A 659-amino-acid chain; its full sequence is Siderophore transporter fer7 (659 aa).

The segment at 1 to 62 (MSNQAQDQPE…ADASSAREGQ (62 aa)) is disordered. The span at 31–41 (QSVSAHGNTSL) shows a compositional bias: polar residues. N-linked (GlcNAc...) asparagine glycosylation is present at N38. Basic and acidic residues predominate over residues 42 to 54 (NKKDRVSAVRDAD). 8 helical membrane-spanning segments follow: residues 79–99 (NSPI…CFAL), 121–141 (LFGV…PFIA), 150–170 (QTAY…VASA), 208–228 (GVVT…GNLI), 245–265 (GMFA…LMYV), 316–336 (LVGL…FSIY), 348–368 (IIAM…WEIL), and 379–399 (VWYN…FMGG). N-linked (GlcNAc...) asparagine glycosylation occurs at N415. The next 2 membrane-spanning stretches (helical) occupy residues 424–444 (VVNA…GFYL) and 451–471 (KFLQ…YLYG). N475 carries N-linked (GlcNAc...) asparagine glycosylation. Transmembrane regions (helical) follow at residues 478-498 (TMVV…SVVG), 528-548 (AIGS…YLAA), and 590-610 (PIFI…LLMP).

The protein belongs to the major facilitator superfamily.

The protein resides in the membrane. Its function is as follows. Siderophore transporter; part of the gene cluster that mediates the biosynthesis of siderophore ferrichrome A which is contributing to organismal virulence. This Mycosarcoma maydis (Corn smut fungus) protein is Siderophore transporter fer7.